We begin with the raw amino-acid sequence, 429 residues long: MSKRPVIESEKPAWHDEDDDNMVVAVPKKVKMTMRVELKRTTDEEHGELDSKEYVGRLQEAFRKRHGGTPKWAKAAAGDEEEGSLLKTAAGYLAKDVNLPKTTIHTTLIKDFNIGHRYTRGITVVKFHKTRPVLIVADQGGNVQLFKVSREVKKDRFLQSANFSKFPIDSLEIADKGHSVICSSSRKEYLMQYNMETREVTQLKPPNTVPKQGIRLFAISHDSQFLAIAGHNSHIYVLHATSMEHITTISLPANASEIKFFPSHSREIWIICETGQIVIANIGLPGTKSSQHTFTDDGAVHGTTLAISQHGDYFATGSDTGIVNVYSGNDCRNSTNPRPLFNVSNLVTAVSSIAFNSDAQLMAICSNVKDNHLRLVHVASQTTFKNFPERNGKVTHARCVEFSPNGGYMAVGNDDGRLHVFEIHHFTDY.

4 WD repeats span residues 117–156, 295–336, 345–386, and 392–428; these read RYTR…KKDR, TDDG…NSTN, NLVT…TFKN, and GKVT…HFTD.

Belongs to the WD repeat UTP18 family.

The protein localises to the nucleus. Its subcellular location is the nucleolus. Its function is as follows. Involved in nucleolar processing of pre-18S ribosomal RNA. This chain is U3 small nucleolar RNA-associated protein 18 homolog, found in Caenorhabditis elegans.